We begin with the raw amino-acid sequence, 167 residues long: MSQHKMKIHGQYVKDFSFENPNSPFLPSSKAPDINVMVNINSAKLEGTENKKGISEEKPFHEITLHIEAKATVKDEDVKDDIAFICEVKYCGIFSIENFTELSEEEVRQALFIGGPTFLFPFAREIIARTTSSGGFPPLMLDPIDFETMYQQQSQQQKSSASNSNFN.

Belongs to the SecB family. In terms of assembly, homotetramer, a dimer of dimers. One homotetramer interacts with 1 SecA dimer.

The protein resides in the cytoplasm. Functionally, one of the proteins required for the normal export of preproteins out of the cell cytoplasm. It is a molecular chaperone that binds to a subset of precursor proteins, maintaining them in a translocation-competent state. It also specifically binds to its receptor SecA. This is Protein-export protein SecB from Wolbachia pipientis subsp. Culex pipiens (strain wPip).